A 367-amino-acid polypeptide reads, in one-letter code: 4-hydroxy-3-methylbut-2-en-1-yl diphosphate synthase (flavodoxin) (367 aa).

[4Fe-4S] cluster-binding residues include cysteine 265, cysteine 268, cysteine 300, and glutamate 307.

It belongs to the IspG family. Requires [4Fe-4S] cluster as cofactor.

It catalyses the reaction (2E)-4-hydroxy-3-methylbut-2-enyl diphosphate + oxidized [flavodoxin] + H2O + 2 H(+) = 2-C-methyl-D-erythritol 2,4-cyclic diphosphate + reduced [flavodoxin]. It participates in isoprenoid biosynthesis; isopentenyl diphosphate biosynthesis via DXP pathway; isopentenyl diphosphate from 1-deoxy-D-xylulose 5-phosphate: step 5/6. Converts 2C-methyl-D-erythritol 2,4-cyclodiphosphate (ME-2,4cPP) into 1-hydroxy-2-methyl-2-(E)-butenyl 4-diphosphate. The protein is 4-hydroxy-3-methylbut-2-en-1-yl diphosphate synthase (flavodoxin) of Bacillus cereus (strain ATCC 10987 / NRS 248).